A 353-amino-acid chain; its full sequence is Methylthioribose-1-phosphate isomerase (353 aa).

D241 acts as the Proton donor in catalysis.

Belongs to the eIF-2B alpha/beta/delta subunits family. MtnA subfamily.

It localises to the cytoplasm. Its subcellular location is the nucleus. The enzyme catalyses 5-(methylsulfanyl)-alpha-D-ribose 1-phosphate = 5-(methylsulfanyl)-D-ribulose 1-phosphate. The protein operates within amino-acid biosynthesis; L-methionine biosynthesis via salvage pathway; L-methionine from S-methyl-5-thio-alpha-D-ribose 1-phosphate: step 1/6. In terms of biological role, catalyzes the interconversion of methylthioribose-1-phosphate (MTR-1-P) into methylthioribulose-1-phosphate (MTRu-1-P). This Danio rerio (Zebrafish) protein is Methylthioribose-1-phosphate isomerase (mri1).